The sequence spans 953 residues: Translation initiation factor IF-2 (953 aa).

Disordered stretches follow at residues 48–212 (SSFS…KIDF) and 279–367 (TKLK…FHEL). Basic and acidic residues-rich tracts occupy residues 80–89 (TGSEHVEKTQ), 98–111 (FKAE…EQAA), and 140–188 (QGDK…ENHK). 2 stretches are compositionally biased toward polar residues: residues 191–207 (RFTN…QSKS) and 282–291 (KSSNISAKST). Over residues 300-317 (ARPEKNRELTHHSQEGQK) the composition is skewed to basic and acidic residues. Over residues 322–338 (SWNSQNQVRNQKNSNWN) the composition is skewed to low complexity. Basic residues predominate over residues 339 to 348 (KNKKTKKGKN). The 170-residue stretch at 454-623 (ERAPVVTIMG…LLVAEVEELK (170 aa)) folds into the tr-type G domain. The segment at 463-470 (GHVDHGKT) is G1. 463–470 (GHVDHGKT) lines the GTP pocket. Residues 488 to 492 (GITQH) form a G2 region. Positions 509-512 (DTPG) are G3. Residues 509-513 (DTPGH) and 563-566 (NKID) contribute to the GTP site. Residues 563–566 (NKID) are G4. A G5 region spans residues 599–601 (SAK).

Belongs to the TRAFAC class translation factor GTPase superfamily. Classic translation factor GTPase family. IF-2 subfamily.

The protein localises to the cytoplasm. Its function is as follows. One of the essential components for the initiation of protein synthesis. Protects formylmethionyl-tRNA from spontaneous hydrolysis and promotes its binding to the 30S ribosomal subunits. Also involved in the hydrolysis of GTP during the formation of the 70S ribosomal complex. This Streptococcus pyogenes serotype M3 (strain ATCC BAA-595 / MGAS315) protein is Translation initiation factor IF-2.